Here is a 123-residue protein sequence, read N- to C-terminus: Large ribosomal subunit protein uL18 (123 aa).

The protein belongs to the universal ribosomal protein uL18 family. Part of the 50S ribosomal subunit; part of the 5S rRNA/L5/L18/L25 subcomplex. Contacts the 5S and 23S rRNAs.

Its function is as follows. This is one of the proteins that bind and probably mediate the attachment of the 5S RNA into the large ribosomal subunit, where it forms part of the central protuberance. The polypeptide is Large ribosomal subunit protein uL18 (Chlamydia pneumoniae (Chlamydophila pneumoniae)).